Reading from the N-terminus, the 134-residue chain is Thionin-2.1 (134 aa).

A signal peptide spans 1–24 (MKGRILILSLLIMSLVMAQVQVEA). Intrachain disulfides connect Cys27-Cys61, Cys28-Cys55, and Cys40-Cys49. A propeptide spans 68-134 (AILENSADAT…VVPPGPPKLL (67 aa)) (acidic domain).

This sequence belongs to the plant thionin (TC 1.C.44) family. Detected in rosette leaves and at a very high level in flowers and in siliques.

It is found in the secreted. In terms of biological role, seems to function as a defense factor. Thionins are small plant proteins which are toxic to animal cells. They seem to exert their toxic effect at the level of the cell membrane. Their precise function is not known. This Arabidopsis thaliana (Mouse-ear cress) protein is Thionin-2.1 (THI2.1).